Reading from the N-terminus, the 73-residue chain is Alternative prion protein (73 aa).

A helical membrane pass occupies residues 32 to 52 (WWWLGAASWWWLGAAPWWWLG).

As to expression, detected in brain homogenate, primary neurons, and peripheral blood mononuclear cells (at protein level).

It localises to the mitochondrion outer membrane. The protein is Alternative prion protein (PRNP) of Homo sapiens (Human).